The chain runs to 142 residues: ATP synthase epsilon chain (142 aa).

This sequence belongs to the ATPase epsilon chain family. F-type ATPases have 2 components, CF(1) - the catalytic core - and CF(0) - the membrane proton channel. CF(1) has five subunits: alpha(3), beta(3), gamma(1), delta(1), epsilon(1). CF(0) has three main subunits: a, b and c.

It localises to the cell inner membrane. Produces ATP from ADP in the presence of a proton gradient across the membrane. The polypeptide is ATP synthase epsilon chain (Shewanella frigidimarina (strain NCIMB 400)).